A 128-amino-acid chain; its full sequence is Disintegrin EO4A (128 aa).

The signal sequence occupies residues 1–20; that stretch reads MIPVLLVTICLAVFPFQGSS. The propeptide occupies 21 to 47; the sequence is IILESGNINDYEIVYPKKVNVLPTGAM. Positions 26–112 constitute a Disintegrin domain; the sequence is GNINDYEIVY…DCPRNPYKGK (87 aa). Intrachain disulfides connect Cys53–Cys76, Cys67–Cys73, Cys72–Cys97, and Cys85–Cys104. The Cell attachment site motif lies at 89–91; that stretch reads RGD. A propeptide spanning residues 115 to 128 is cleaved from the precursor; the sequence is PMKWPAAAKGSVLM.

It belongs to the disintegrin family. Dimeric disintegrin subfamily. Heterodimer with EO5B; disulfide-linked. As to expression, expressed by the venom gland.

The protein localises to the secreted. Its function is as follows. Poor inhibitor of platelet aggregation. The disintegrin inhibits the adhesion of cells expressing the RGD-dependent integrin alpha-5/beta-1 (ITGA5/ITGB1) to immobilized fibronectin. Inhibition on alpha-2b/beta-3 (ITGA2B/ITGB3) is low. This Echis ocellatus (Ocellated saw-scaled viper) protein is Disintegrin EO4A.